Here is a 159-residue protein sequence, read N- to C-terminus: 2-C-methyl-D-erythritol 2,4-cyclodiphosphate synthase (159 aa).

A divalent metal cation is bound by residues aspartate 10 and histidine 12. Residues 10-12 (DVH) and 36-37 (HS) contribute to the 4-CDP-2-C-methyl-D-erythritol 2-phosphate site. Histidine 44 contributes to the a divalent metal cation binding site. Residues 58 to 60 (DIG), 63 to 67 (FPDTD), 102 to 108 (AQVPKMA), 134 to 137 (TTTE), phenylalanine 141, and arginine 144 each bind 4-CDP-2-C-methyl-D-erythritol 2-phosphate.

The protein belongs to the IspF family. In terms of assembly, homotrimer. A divalent metal cation is required as a cofactor.

The catalysed reaction is 4-CDP-2-C-methyl-D-erythritol 2-phosphate = 2-C-methyl-D-erythritol 2,4-cyclic diphosphate + CMP. It functions in the pathway isoprenoid biosynthesis; isopentenyl diphosphate biosynthesis via DXP pathway; isopentenyl diphosphate from 1-deoxy-D-xylulose 5-phosphate: step 4/6. Its function is as follows. Involved in the biosynthesis of isopentenyl diphosphate (IPP) and dimethylallyl diphosphate (DMAPP), two major building blocks of isoprenoid compounds. Catalyzes the conversion of 4-diphosphocytidyl-2-C-methyl-D-erythritol 2-phosphate (CDP-ME2P) to 2-C-methyl-D-erythritol 2,4-cyclodiphosphate (ME-CPP) with a corresponding release of cytidine 5-monophosphate (CMP). The polypeptide is 2-C-methyl-D-erythritol 2,4-cyclodiphosphate synthase (Shewanella woodyi (strain ATCC 51908 / MS32)).